The primary structure comprises 377 residues: Alanine racemase (377 aa).

Catalysis depends on Lys-37, which acts as the Proton acceptor; specific for D-alanine. N6-(pyridoxal phosphate)lysine is present on Lys-37. Arg-135 contacts substrate. The active-site Proton acceptor; specific for L-alanine is the Tyr-271. Met-319 contacts substrate.

It belongs to the alanine racemase family. Pyridoxal 5'-phosphate is required as a cofactor.

It carries out the reaction L-alanine = D-alanine. It participates in amino-acid biosynthesis; D-alanine biosynthesis; D-alanine from L-alanine: step 1/1. Catalyzes the interconversion of L-alanine and D-alanine. May also act on other amino acids. This Helicobacter pylori (strain P12) protein is Alanine racemase (alr).